A 388-amino-acid chain; its full sequence is Phosphoribosylformylglycinamidine cyclo-ligase, chloroplastic/mitochondrial (388 aa).

The protein belongs to the AIR synthase family.

It is found in the plastid. The protein resides in the chloroplast. It localises to the mitochondrion. It carries out the reaction 2-formamido-N(1)-(5-O-phospho-beta-D-ribosyl)acetamidine + ATP = 5-amino-1-(5-phospho-beta-D-ribosyl)imidazole + ADP + phosphate + H(+). It participates in purine metabolism; IMP biosynthesis via de novo pathway; 5-amino-1-(5-phospho-D-ribosyl)imidazole from N(2)-formyl-N(1)-(5-phospho-D-ribosyl)glycinamide: step 2/2. The chain is Phosphoribosylformylglycinamidine cyclo-ligase, chloroplastic/mitochondrial (PUR5) from Vigna unguiculata (Cowpea).